We begin with the raw amino-acid sequence, 590 residues long: Aspartate--tRNA(Asp/Asn) ligase (590 aa).

Glutamate 173 contacts L-aspartate. The aspartate stretch occupies residues 197 to 200 (QIFK). An L-aspartate-binding site is contributed by arginine 219. ATP is bound by residues 219–221 (RDE) and glutamine 228. Histidine 450 contacts L-aspartate. ATP is bound at residue glutamate 484. Arginine 491 serves as a coordination point for L-aspartate. Position 536–539 (536–539 (GLDR)) interacts with ATP.

It belongs to the class-II aminoacyl-tRNA synthetase family. Type 1 subfamily. As to quaternary structure, homodimer.

It localises to the cytoplasm. It carries out the reaction tRNA(Asx) + L-aspartate + ATP = L-aspartyl-tRNA(Asx) + AMP + diphosphate. Functionally, aspartyl-tRNA synthetase with relaxed tRNA specificity since it is able to aspartylate not only its cognate tRNA(Asp) but also tRNA(Asn). Reaction proceeds in two steps: L-aspartate is first activated by ATP to form Asp-AMP and then transferred to the acceptor end of tRNA(Asp/Asn). The polypeptide is Aspartate--tRNA(Asp/Asn) ligase (Coxiella burnetii (strain RSA 331 / Henzerling II)).